A 702-amino-acid chain; its full sequence is MSAPVHPVPGADGGDPLRPATPGLRSPQVPIQVPAGSTAAAAVSEAGLPTHGAPDAIVVVRDADGKLRDLSWVPDVDVEVTPVPVNTDDGRSVIRHSTAHVLAQAVQDLFPQAKLGIGPPITDGFYYDFDVAEPFTPEDLKALEKRMRQIVKEGQLFSRRIYESKEQARTEWAGEPYKLELVDDESGDAEIMEVGGDELTAYDNLNARNGERIWGDLCRGPHIPTTKHIPAFKLTRSSAAYWRGNQKNASLQRIYGTAWESQEALDRHLEMITEAQRRDHRKLGIELDLFSFPDEIGSGLAIFHPKGSIVRREMEEYSRRKHIEAGYQFVNTPHITKAQLFHTSGHLDWYAEGIFPPMHLDAEHNDDGTVRKPGQDYYLKPMNCPMHTLIFSSRGRSYRELPLRLFEFGTIYRYEKSGVVHGLTRARGFTMDDSHIFCTREQLHCELASLLRFVLDLLGDYGLEDFYLELSTKDPEKFVGSEEIWEEATAALAEVAENSTLPLVPDPGGAAFYGPKISVQVRDALGRSWQMSTIQVDFNFPERFALEYTSADGTRQRPVMIHRALFGSIERFFGILTEHYAGAFPAWLAPIQVVGIPVTGEHVSYLEEVAAQLKSCGVRTEVDVSDDRMAKKIVRHTNQKVPFMLLAGDRDVRTGSVSFRFGDRTQINGVARDSAVEAIVCWIVDRENDFPTAELVKVTGGE.

Positions 1-30 (MSAPVHPVPGADGGDPLRPATPGLRSPQVP) are disordered. The TGS domain occupies 15-84 (DPLRPATPGL…DVDVEVTPVP (70 aa)). The interval 279-585 (DHRKLGIELD…LTEHYAGAFP (307 aa)) is catalytic. Residues Cys-384, His-435, and His-562 each contribute to the Zn(2+) site.

This sequence belongs to the class-II aminoacyl-tRNA synthetase family. Homodimer. The cofactor is Zn(2+).

It localises to the cytoplasm. It carries out the reaction tRNA(Thr) + L-threonine + ATP = L-threonyl-tRNA(Thr) + AMP + diphosphate + H(+). Catalyzes the attachment of threonine to tRNA(Thr) in a two-step reaction: L-threonine is first activated by ATP to form Thr-AMP and then transferred to the acceptor end of tRNA(Thr). Also edits incorrectly charged L-seryl-tRNA(Thr). The sequence is that of Threonine--tRNA ligase from Mycobacterium leprae (strain Br4923).